Consider the following 169-residue polypeptide: Large ribosomal subunit protein bL9 (169 aa).

Belongs to the bacterial ribosomal protein bL9 family.

Functionally, binds to the 23S rRNA. This chain is Large ribosomal subunit protein bL9, found in Chlamydia pneumoniae (Chlamydophila pneumoniae).